The chain runs to 598 residues: MKNIRNFSIIAHIDHGKSTLSDRLIQSCGGLSDREMEAQVLDSMDLERERGITIKAQSVTLNYRAKDGETYQLNFIDTPGHVDFSYEVSRSLAACEGALLVVDAGQGVEAQTLANCYTAIEMDLEVVPILNKIDLPAAEPERVAEEIEDIVGIDAIDAVRCSAKTGVGIEDVLEEIVRKIPAPEGDPNAPLQALIIDSWFDNYLGVVSLVRVKNGILRKGDKIKVMSTGQSYNVDRLGIFTPKQVDTTELKTGEVGWLVCAIKDILGAPVGDTLTSHHNPATSVLPGFKKVKPQVYAGLFPISSDDYESFRDALGKLSLNDASLFYEPENSTALGFGFRCGFLGLLHMEIIQERLEREYDLDLITTAPTVVYEVEQTNGEVIYVDSPAKLPPLNNIAEIREPIAECNMLLPQSYLGNVITLCVEKRGVQTNMVYHGNQVALTYEIPMGEVVLDFFDRLKSTSRGYASLDYGFKRFQAADMVRVDIMINGERVDALALIVHKDNAQYRGRELVEKMRELIPRQQFDIAIQAAIGNHIIARSTVKQLRKNVLAKCYGGDVSRKKKLLQKQKEGKKRMKSLGNVEVPQEAFLAILHVGKDK.

The 183-residue stretch at 2–184 folds into the tr-type G domain; that stretch reads KNIRNFSIIA…EIVRKIPAPE (183 aa). Residues 14-19 and 131-134 contribute to the GTP site; these read DHGKST and NKID.

It belongs to the TRAFAC class translation factor GTPase superfamily. Classic translation factor GTPase family. LepA subfamily.

It is found in the cell inner membrane. The catalysed reaction is GTP + H2O = GDP + phosphate + H(+). Functionally, required for accurate and efficient protein synthesis under certain stress conditions. May act as a fidelity factor of the translation reaction, by catalyzing a one-codon backward translocation of tRNAs on improperly translocated ribosomes. Back-translocation proceeds from a post-translocation (POST) complex to a pre-translocation (PRE) complex, thus giving elongation factor G a second chance to translocate the tRNAs correctly. Binds to ribosomes in a GTP-dependent manner. This chain is Elongation factor 4, found in Histophilus somni (strain 2336) (Haemophilus somnus).